We begin with the raw amino-acid sequence, 235 residues long: Ribonuclease 3 (235 aa).

In terms of domain architecture, RNase III spans 6 to 135; the sequence is LISLEKILGF…VIGAVYFDCG (130 aa). A Mg(2+)-binding site is contributed by Glu-48. Asp-52 is an active-site residue. Positions 121 and 124 each coordinate Mg(2+). The active site involves Glu-124. A DRBM domain is found at 162-231; the sequence is DEKTTLQELL…AKKALELLKN (70 aa).

Belongs to the ribonuclease III family. In terms of assembly, homodimer. Mg(2+) is required as a cofactor.

It is found in the cytoplasm. The catalysed reaction is Endonucleolytic cleavage to 5'-phosphomonoester.. Its function is as follows. Digests double-stranded RNA. Involved in the processing of primary rRNA transcript to yield the immediate precursors to the large and small rRNAs (23S and 16S). Processes some mRNAs, and tRNAs when they are encoded in the rRNA operon. Processes pre-crRNA and tracrRNA of type II CRISPR loci if present in the organism. The polypeptide is Ribonuclease 3 (Carboxydothermus hydrogenoformans (strain ATCC BAA-161 / DSM 6008 / Z-2901)).